A 204-amino-acid polypeptide reads, in one-letter code: Methyl-CpG-binding domain-containing protein 1 (204 aa).

Residues M1–G46 are disordered. Residues E15–S24 show a composition bias toward polar residues. Over residues K25–A34 the composition is skewed to basic and acidic residues. Residues G49–Y104 form a CW-type zinc finger. An MBD-associated domain (MAD) motif is present at residues Q58–C96. Positions 59, 62, 88, and 96 each coordinate Zn(2+). One can recognise an MBD domain in the interval W110–V180.

Mostly expressed in flowers and buds.

It is found in the nucleus. Its function is as follows. Probable transcriptional regulator. The polypeptide is Methyl-CpG-binding domain-containing protein 1 (MBD1) (Arabidopsis thaliana (Mouse-ear cress)).